Reading from the N-terminus, the 304-residue chain is Haloalkane dehalogenase (304 aa).

The 113-residue stretch at 42–154 folds into the AB hydrolase-1 domain; that stretch reads PIVFLHGNPT…DSVDLSPEFV (113 aa). The active-site Nucleophile is the D114. E138 acts as the Proton donor in catalysis. H280 functions as the Proton acceptor in the catalytic mechanism.

Belongs to the haloalkane dehalogenase family. Type 2 subfamily. As to quaternary structure, monomer.

The catalysed reaction is 1-haloalkane + H2O = a halide anion + a primary alcohol + H(+). Its function is as follows. Catalyzes hydrolytic cleavage of carbon-halogen bonds in halogenated aliphatic compounds, leading to the formation of the corresponding primary alcohols, halide ions and protons. This is Haloalkane dehalogenase from Agrobacterium fabrum (strain C58 / ATCC 33970) (Agrobacterium tumefaciens (strain C58)).